The following is a 337-amino-acid chain: HTH-type transcriptional regulator DegA (337 aa).

The 57-residue stretch at 1-57 folds into the HTH lacI-type domain; the sequence is MKTTIYDVAKAAGVSITTVSRVINNTGRISDKTRQKVMNVMNEMAYTPNVHAAALTG. Residues 5-24 constitute a DNA-binding region (H-T-H motif); the sequence is IYDVAKAAGVSITTVSRVIN. Residues 300–319 are disordered; it reads AERHRTAGRSNRGKRKAKQK.

Functionally, involved in the control of degradation of B.subtilis amidophosphoribosyltransferase (purF). Probably activates the gene for a degradative protease. This chain is HTH-type transcriptional regulator DegA (degA), found in Bacillus subtilis (strain 168).